Consider the following 441-residue polypeptide: Probable D-serine dehydratase (441 aa).

K117 is modified (N6-(pyridoxal phosphate)lysine).

Belongs to the serine/threonine dehydratase family. DsdA subfamily. Pyridoxal 5'-phosphate serves as cofactor.

It catalyses the reaction D-serine = pyruvate + NH4(+). This Acinetobacter baylyi (strain ATCC 33305 / BD413 / ADP1) protein is Probable D-serine dehydratase.